The sequence spans 202 residues: PITH domain-containing protein 1 (202 aa).

In terms of domain architecture, PITH spans 11–184 (SHGVDDGIEY…IVNTVYESKP (174 aa)).

Belongs to the PITHD1 family.

This Dictyostelium discoideum (Social amoeba) protein is PITH domain-containing protein 1.